The sequence spans 337 residues: uncharacterized protein (337 aa).

One can recognise an F-box domain in the interval 22 to 76; sequence PFRLLSLPTLALKNVLLHIDFIDLLELSLASKKCEIYMKTCCLKIDSLHFHFRRI.

This is an uncharacterized protein from Caenorhabditis elegans.